We begin with the raw amino-acid sequence, 513 residues long: Glucose-6-phosphate 1-dehydrogenase 2 (513 aa).

An N-acetylalanine modification is found at A2. At S8 the chain carries Phosphoserine. T10 carries the phosphothreonine modification. NADP(+)-binding positions include 38-45 and R72; that span reads GASGDLAK. Residue K89 is modified to N6-acetyllysine. NADP(+) contacts are provided by Y147 and K171. Residues K171, 201-205, E239, and D258 contribute to the D-glucose 6-phosphate site; that span reads HYLDK. At K171 the chain carries N6-(2-hydroxyisobutyryl)lysine; alternate. The residue at position 171 (K171) is an N6-acetyllysine; alternate. Residue H263 is the Proton acceptor of the active site. R357 lines the NADP(+) pocket. Positions 360 and 365 each coordinate D-glucose 6-phosphate. NADP(+) contacts are provided by K366, R370, and R393. Q395 serves as a coordination point for D-glucose 6-phosphate. Position 421–423 (421–423) interacts with NADP(+); that stretch reads DLT. K432 carries the N6-acetyllysine modification. NADP(+) contacts are provided by R487 and Y503. Y503 is modified (phosphotyrosine).

Belongs to the glucose-6-phosphate dehydrogenase family. As to quaternary structure, homotetramer; dimer of dimers. Interacts with SIRT2; the interaction is enhanced by H(2)O(2) treatment. In terms of processing, acetylated by ELP3; acetylation inhibits its homodimerization and enzyme activity. Deacetylated by SIRT2; deacetylation stimulates its enzyme activity. In terms of tissue distribution, testis.

It is found in the cytoplasm. The protein localises to the cytosol. Its subcellular location is the membrane. The enzyme catalyses D-glucose 6-phosphate + NADP(+) = 6-phospho-D-glucono-1,5-lactone + NADPH + H(+). The protein operates within carbohydrate degradation; pentose phosphate pathway; D-ribulose 5-phosphate from D-glucose 6-phosphate (oxidative stage): step 1/3. Functionally, catalyzes the rate-limiting step of the oxidative pentose-phosphate pathway, which represents a route for the dissimilation of carbohydrates besides glycolysis. The main function of this enzyme is to provide reducing power (NADPH) and pentose phosphates for fatty acid and nucleic acid synthesis. The polypeptide is Glucose-6-phosphate 1-dehydrogenase 2 (G6pd2) (Mus musculus (Mouse)).